We begin with the raw amino-acid sequence, 50 residues long: Protein PsbN (50 aa).

Residues 14-34 (IAVTILAILLALTGFGLWSAF) form a helical membrane-spanning segment.

The protein belongs to the PsbN family.

The protein localises to the cellular thylakoid membrane. Functionally, may play a role in photosystem I and II biogenesis. The sequence is that of Protein PsbN from Prochlorococcus marinus (strain MIT 9215).